The chain runs to 498 residues: Protein flp (498 aa).

4 consecutive transmembrane segments (helical) span residues 6 to 26 (LYFL…IYIT), 389 to 409 (FNIV…FSAY), 433 to 453 (LTLC…YLIL), and 471 to 491 (LALI…LLFL).

It is found in the cell membrane. Functionally, its precise function is unknown. Has no penicillin-binding activity and is not involved in methicillin resistance. This chain is Protein flp (flp), found in Staphylococcus aureus (strain Mu50 / ATCC 700699).